The sequence spans 81 residues: Defensin-like protein 153 (81 aa).

The signal sequence occupies residues 1-26 (MKNVSQVSVAVLLIFSILVLGIGVQG). 4 disulfide bridges follow: cysteine 30–cysteine 81, cysteine 41–cysteine 60, cysteine 46–cysteine 75, and cysteine 50–cysteine 77.

This sequence belongs to the DEFL family.

Its subcellular location is the secreted. This Arabidopsis thaliana (Mouse-ear cress) protein is Defensin-like protein 153 (LCR31).